The following is a 192-amino-acid chain: Guanylate kinase (192 aa).

In terms of domain architecture, Guanylate kinase-like spans 7–185; the sequence is GLIIILSSPS…TLKKIHEIIV (179 aa). Position 14-21 (14-21) interacts with ATP; the sequence is SPSGTGKS.

This sequence belongs to the guanylate kinase family.

The protein localises to the cytoplasm. The enzyme catalyses GMP + ATP = GDP + ADP. Functionally, essential for recycling GMP and indirectly, cGMP. This chain is Guanylate kinase, found in Rickettsia felis (strain ATCC VR-1525 / URRWXCal2) (Rickettsia azadi).